A 196-amino-acid chain; its full sequence is MRNPIHKRLENLESWQHLTFMAALCERMAPNFKLFCQMNELSAETKTYQNILNLVWEYLTVKDVKINFENQLEKLETIIPDVNDYDSFGVVPALDACQALAEILHAIIAGETLEKAVEISLISLGTIRVLLETETGRDWSESKLKENEDIQTELDVQWQVYRLLKECEKRDIELILALKNEIRTEGISNIGIEFHQ.

The protein to E.coli YjaG.

This is an uncharacterized protein from Haemophilus influenzae (strain ATCC 51907 / DSM 11121 / KW20 / Rd).